We begin with the raw amino-acid sequence, 303 residues long: L(+)-tartrate dehydratase subunit alpha (303 aa).

Residues C71, C190, and C277 each contribute to the iron-sulfur cluster site.

Belongs to the class-I fumarase family. In terms of assembly, tetramer of two alpha and two beta subunits. It depends on iron-sulfur cluster as a cofactor.

The catalysed reaction is (2R,3R)-tartrate = oxaloacetate + H2O. This Escherichia coli O157:H7 protein is L(+)-tartrate dehydratase subunit alpha (ttdA).